A 252-amino-acid polypeptide reads, in one-letter code: GTP cyclohydrolase 1 type 2 homolog (252 aa).

The a divalent metal cation site is built by H65, H66, D103, H220, and E224.

Belongs to the GTP cyclohydrolase I type 2/NIF3 family. Homohexamer.

This chain is GTP cyclohydrolase 1 type 2 homolog, found in Pseudomonas aeruginosa (strain ATCC 15692 / DSM 22644 / CIP 104116 / JCM 14847 / LMG 12228 / 1C / PRS 101 / PAO1).